Consider the following 1049-residue polypeptide: Protein phosphatase Slingshot homolog 1 (1049 aa).

The segment covering 1 to 12 has biased composition (polar residues); sequence MALVTLQRSPTP. The interval 1 to 28 is disordered; it reads MALVTLQRSPTPSAASSSASNSELEAGS. At Ala2 the chain carries N-acetylalanine. Residues 13–25 show a composition bias toward low complexity; sequence SAASSSASNSELE. 2 positions are modified to phosphoserine: Ser37 and Ser57. The DEK-C domain occupies 249–304; the sequence is ERTERLIKAKLRSIMMSQDLENVTSKEIRNELEKQMNCNLKELKEFIDNEMLLILG. A Tyrosine-protein phosphatase domain is found at 308-449; that stretch reads KPSLIFDHLY…LSEYEGILDA (142 aa). The active-site Phosphocysteine intermediate is the Cys393. A disordered region spans residues 456–499; sequence KLWRQQTDSSLQQPVDDPAGPGDFLPETPDGTPESQLPFLDDAA. Residues 458-468 show a composition bias toward polar residues; it reads WRQQTDSSLQQ. Ser515 bears the Phosphoserine mark. Disordered regions lie at residues 544 to 603, 693 to 787, 825 to 899, and 923 to 955; these read AAPP…RWGQ, HLAS…KPAK, HTKE…KSPP, and PTSS…KQRT. Residues 564–573 show a composition bias toward basic and acidic residues; sequence CEKDVKKKLE. Ser576 is subject to Phosphoserine. Residues 731–742 show a composition bias toward low complexity; it reads GAALEPPASLLE. A compositionally biased stretch (basic and acidic residues) spans 772–787; that stretch reads VIKEESSPKKDMKPAK. Phosphoserine is present on Ser897. The tract at residues 897 to 1049 is interaction with YWHAG; that stretch reads SPPPFFYRLD…LKSPSWMSKS (153 aa). Positions 925 to 943 are enriched in low complexity; the sequence is SSSMSSNLTRSSSSDSIHS. At Ser978 the chain carries Phosphoserine. The tract at residues 989–1049 is disordered; the sequence is TEDLSSEADP…LKSPSWMSKS (61 aa). A compositionally biased stretch (polar residues) spans 1001–1013; it reads VADSQDTTLSESS.

Belongs to the protein-tyrosine phosphatase family. As to quaternary structure, interacts with actin and this stimulates phosphatase activity. Also interacts with LIMK1 and with the 14-3-3 proteins YWHAB, YWHAG, YWHAQ, and YWHAZ. Interaction with 14-3-3 proteins inhibits phosphatase activity and also blocks recruitment to lamellipodia and stimulation by actin. In terms of processing, phosphorylated. Inhibitory phosphorylation by PAK4 promotes binding to YWHAZ. Phosphorylation at Ser-978 is decreased by stimuli which promote actin reorganization and lamellipodia formation. Can be dephosphorylated and activated by PPP3CA/calcineurin A. Phosphorylation decreases immediately prior to telophase.

The protein resides in the cytoplasm. It is found in the cytoskeleton. The protein localises to the cell projection. It localises to the lamellipodium. Its subcellular location is the cleavage furrow. The protein resides in the midbody. The catalysed reaction is O-phospho-L-tyrosyl-[protein] + H2O = L-tyrosyl-[protein] + phosphate. It catalyses the reaction O-phospho-L-seryl-[protein] + H2O = L-seryl-[protein] + phosphate. The enzyme catalyses O-phospho-L-threonyl-[protein] + H2O = L-threonyl-[protein] + phosphate. Its function is as follows. Protein phosphatase which regulates actin filament dynamics. Dephosphorylates and activates the actin binding/depolymerizing factor cofilin, which subsequently binds to actin filaments and stimulates their disassembly. Inhibitory phosphorylation of cofilin is mediated by LIMK1, which may also be dephosphorylated and inactivated by this protein. The sequence is that of Protein phosphatase Slingshot homolog 1 from Homo sapiens (Human).